Here is a 314-residue protein sequence, read N- to C-terminus: tRNA pseudouridine synthase B (314 aa).

H43 is a binding site for substrate. D48 functions as the Nucleophile in the catalytic mechanism. Y76, Y179, and L200 together coordinate substrate.

This sequence belongs to the pseudouridine synthase TruB family. Type 1 subfamily.

It catalyses the reaction uridine(55) in tRNA = pseudouridine(55) in tRNA. Its function is as follows. Responsible for synthesis of pseudouridine from uracil-55 in the psi GC loop of transfer RNAs. The chain is tRNA pseudouridine synthase B from Shigella boydii serotype 4 (strain Sb227).